The sequence spans 113 residues: Large ribosomal subunit protein uL22 (113 aa).

This sequence belongs to the universal ribosomal protein uL22 family. In terms of assembly, part of the 50S ribosomal subunit.

In terms of biological role, this protein binds specifically to 23S rRNA; its binding is stimulated by other ribosomal proteins, e.g. L4, L17, and L20. It is important during the early stages of 50S assembly. It makes multiple contacts with different domains of the 23S rRNA in the assembled 50S subunit and ribosome. The globular domain of the protein is located near the polypeptide exit tunnel on the outside of the subunit, while an extended beta-hairpin is found that lines the wall of the exit tunnel in the center of the 70S ribosome. In Bacillus thuringiensis subsp. konkukian (strain 97-27), this protein is Large ribosomal subunit protein uL22.